The primary structure comprises 189 residues: dCTP deaminase (189 aa).

Residues 112 to 117 (KSTYAR), 136 to 138 (TLE), Q157, Y171, and Q181 contribute to the dCTP site. E138 acts as the Proton donor/acceptor in catalysis.

This sequence belongs to the dCTP deaminase family. Homotrimer.

It catalyses the reaction dCTP + H2O + H(+) = dUTP + NH4(+). It functions in the pathway pyrimidine metabolism; dUMP biosynthesis; dUMP from dCTP (dUTP route): step 1/2. Its function is as follows. Catalyzes the deamination of dCTP to dUTP. The chain is dCTP deaminase from Paraburkholderia xenovorans (strain LB400).